Reading from the N-terminus, the 264-residue chain is Thiazole synthase (264 aa).

The Schiff-base intermediate with DXP role is filled by K106. Residues G167, 193–194 (AG), and 215–216 (NS) each bind 1-deoxy-D-xylulose 5-phosphate.

The protein belongs to the ThiG family. Homotetramer. Forms heterodimers with either ThiH or ThiS.

The protein resides in the cytoplasm. The enzyme catalyses [ThiS sulfur-carrier protein]-C-terminal-Gly-aminoethanethioate + 2-iminoacetate + 1-deoxy-D-xylulose 5-phosphate = [ThiS sulfur-carrier protein]-C-terminal Gly-Gly + 2-[(2R,5Z)-2-carboxy-4-methylthiazol-5(2H)-ylidene]ethyl phosphate + 2 H2O + H(+). Its pathway is cofactor biosynthesis; thiamine diphosphate biosynthesis. Functionally, catalyzes the rearrangement of 1-deoxy-D-xylulose 5-phosphate (DXP) to produce the thiazole phosphate moiety of thiamine. Sulfur is provided by the thiocarboxylate moiety of the carrier protein ThiS. In vitro, sulfur can be provided by H(2)S. This chain is Thiazole synthase, found in Ectopseudomonas mendocina (strain ymp) (Pseudomonas mendocina).